A 542-amino-acid polypeptide reads, in one-letter code: Chitinase 1 (542 aa).

In terms of domain architecture, GH18 spans 68 to 506 (FNVLCYFTDW…NAAHEGLKRR (439 aa)). Chitin contacts are provided by residues 186–187 (QE) and 213–216 (GGWS). Catalysis depends on glutamate 256, which acts as the Proton donor. Residues tyrosine 257, 323–326 (MTYD), and tryptophan 486 each bind chitin.

It belongs to the glycosyl hydrolase 18 family. In terms of assembly, semipurified toxin complex consists of at least YenA1-YenA2-YenB-YenC1-YenC2-Chi1-Chi2. The Yen-TC:K9 subcomplex is about 26 nm tall and 22 nm in diameter with 5-fold symmetry and 5 copies of YenA1, YenA2, Chi1 and Chi2; the chitinase subunits may be solvent accessible on the exterior the complex. The Yen-TC:K9 subcomplex has no insecticidal activity. The native complex with additional YenB, YenC1 and YenC2 subunits is 16 nm taller and is insecticidal; the toxicity-conferring subunits are present at about 1 copy each.

It is found in the secreted. The enzyme catalyses Random endo-hydrolysis of N-acetyl-beta-D-glucosaminide (1-&gt;4)-beta-linkages in chitin and chitodextrins.. Toxin complex is secreted when grown at 25 degrees Celsius or less; at higher temperatures the proteins are present intracellularly but not secreted. Part of an orally active toxin complex (TC) with strong insecticidal effects on larvae of the Coleoptera Costelytra zealandica, Acrossidius tasmania and Adoryphorus couloni and some Lepidoptera larvae. The TC has an endochitinase activity. This subunit might aid infection by degradation of the larval peritrophic membrane. The polypeptide is Chitinase 1 (Yersinia entomophaga).